A 145-amino-acid chain; its full sequence is 3-hydroxyacyl-[acyl-carrier-protein] dehydratase FabZ (145 aa).

His48 is an active-site residue.

Belongs to the thioester dehydratase family. FabZ subfamily.

It localises to the cytoplasm. The catalysed reaction is a (3R)-hydroxyacyl-[ACP] = a (2E)-enoyl-[ACP] + H2O. Involved in unsaturated fatty acids biosynthesis. Catalyzes the dehydration of short chain beta-hydroxyacyl-ACPs and long chain saturated and unsaturated beta-hydroxyacyl-ACPs. This chain is 3-hydroxyacyl-[acyl-carrier-protein] dehydratase FabZ, found in Marinomonas sp. (strain MWYL1).